Consider the following 118-residue polypeptide: Small ribosomal subunit protein uS13 (118 aa).

Residues 94-118 (GLPVRGQRTKTNARTRKGPRKPIKK) are disordered.

It belongs to the universal ribosomal protein uS13 family. As to quaternary structure, part of the 30S ribosomal subunit. Forms a loose heterodimer with protein S19. Forms two bridges to the 50S subunit in the 70S ribosome.

Its function is as follows. Located at the top of the head of the 30S subunit, it contacts several helices of the 16S rRNA. In the 70S ribosome it contacts the 23S rRNA (bridge B1a) and protein L5 of the 50S subunit (bridge B1b), connecting the 2 subunits; these bridges are implicated in subunit movement. Contacts the tRNAs in the A and P-sites. This chain is Small ribosomal subunit protein uS13, found in Edwardsiella ictaluri (strain 93-146).